We begin with the raw amino-acid sequence, 402 residues long: Cholinephosphotransferase 1 (402 aa).

Residues 1–62 (MGLAEGLAAR…LVEKVPLWLA (62 aa)) are Cytoplasmic-facing. Residues 63 to 83 (PNTITMVGLLLNVLSTLILVC) traverse the membrane as a helical segment. Residue asparagine 64 participates in CDP-choline binding. Over 84–93 (YCPTATEGAP) the chain is Lumenal. The chain crosses the membrane as a helical span at residues 94–118 (FWTYLLCAIGLFVYQSLDAIDGKQA). Positions 111 and 114 each coordinate Mg(2+). Arginine 119 contacts CDP-choline. The Cytoplasmic portion of the chain corresponds to 119 to 125 (RRTNSSS). A helical transmembrane segment spans residues 126–150 (PLGEMFDHGCDSISIVFVNLGTIAA). Aspartate 132 is a Mg(2+) binding site. Histidine 133 functions as the Proton acceptor in the catalytic mechanism. Aspartate 136 contributes to the Mg(2+) binding site. The Lumenal portion of the chain corresponds to 151 to 160 (VRLGTLPGWM). A helical transmembrane segment spans residues 161-179 (FYCCFVGMFMFYCAQWQTY). Residues 180–190 (VCGTLKFGIID) are Cytoplasmic-facing. The chain crosses the membrane as a helical span at residues 191–207 (VTELQISVTVMFLMTAV). The Lumenal segment spans residues 208-222 (CGPELWDYEIPFTGL). Residues 223–248 (PMKTIPLLGIIGGTVYSCSNYFRVIL) form a helical membrane-spanning segment. At 249–265 (SGGVGKNGSTVAGTSVL) the chain is on the cytoplasmic side. Residues 266–281 (SPGLHIGLVLLLALMI) form a helical membrane-spanning segment. Residues 282–293 (YKKSTTNLFLQN) are Lumenal-facing. The helical transmembrane segment at 294–316 (PCLYTLAFGFVSAKITIKLVIAH) threads the bilayer. At 317-329 (MTKSEISLQDTAF) the chain is on the cytoplasmic side. A helical transmembrane segment spans residues 330–339 (IGPGLLFFNQ). At 340 to 346 (YFNSFID) the chain is on the lumenal side. Residues 347–376 (EYIVLWIAMVISFADLLRYCISVCLQIATH) traverse the membrane as a helical segment. The Cytoplasmic segment spans residues 377 to 402 (LRISVFRISSNQAAEQVQTQKQKLTD).

This sequence belongs to the CDP-alcohol phosphatidyltransferase class-I family. Homodimer. Mg(2+) is required as a cofactor. It depends on Mn(2+) as a cofactor.

It is found in the golgi apparatus membrane. The enzyme catalyses CDP-choline + a 1,2-diacyl-sn-glycerol = a 1,2-diacyl-sn-glycero-3-phosphocholine + CMP + H(+). It carries out the reaction 1,2-dioctanoyl-sn-glycerol + CDP-choline = 1,2-dioctanoyl-sn-glycero-3-phosphocholine + CMP + H(+). The catalysed reaction is 1-octadecanoyl-2-(5Z,8Z,11Z,14Z-eicosatetraenoyl)-sn-glycerol + CDP-choline = 1-octadecanoyl-2-(5Z,8Z,11Z,14Z-eicosatetraenoyl)-sn-glycero-3-phosphocholine + CMP + H(+). It catalyses the reaction 1-hexadecanoyl-2-(9Z-octadecenoyl)-sn-glycerol + CDP-choline = 1-hexadecanoyl-2-(9Z-octadecenoyl)-sn-glycero-3-phosphocholine + CMP + H(+). The enzyme catalyses 1-hexadecanoyl-2-(4Z,7Z,10Z,13Z,16Z,19Z-docosahexaenoyl)-sn-glycerol + CDP-choline = 1-hexadecanoyl-2-(4Z,7Z,10Z,13Z,16Z,19Z-docosahexaenoyl)-sn-glycero-3-phosphocholine + CMP + H(+). The protein operates within phospholipid metabolism; phosphatidylcholine biosynthesis; phosphatidylcholine from phosphocholine: step 2/2. Functionally, catalyzes the final step of de novo phosphatidylcholine (PC) synthesis, i.e. the transfer of choline phosphate from CDP-choline to the free hydroxyl of a diacylglycerol (DAG), producing a PC. It thereby plays a central role in the formation and maintenance of vesicular membranes. Shows a high preference for CDP-choline over CDP-ethanolamine as substrate. The polypeptide is Cholinephosphotransferase 1 (chpt1) (Xenopus laevis (African clawed frog)).